The sequence spans 262 residues: Cytochrome c oxidase subunit 3 (262 aa).

7 consecutive transmembrane segments (helical) span residues 11–31, 32–52, 83–103, 125–147, 160–180, 198–218, and 240–260; these read LVEP…LTVG, LVMW…VMIV, GMVL…WAFF, LNAF…TVTW, AIQS…LQAW, FFVA…FLMV, and AWYW…IYWW.

Belongs to the cytochrome c oxidase subunit 3 family. As to quaternary structure, component of the cytochrome c oxidase (complex IV, CIV), a multisubunit enzyme composed of a catalytic core of 3 subunits and several supernumerary subunits. The complex exists as a monomer or a dimer and forms supercomplexes (SCs) in the inner mitochondrial membrane with ubiquinol-cytochrome c oxidoreductase (cytochrome b-c1 complex, complex III, CIII).

It is found in the mitochondrion inner membrane. It carries out the reaction 4 Fe(II)-[cytochrome c] + O2 + 8 H(+)(in) = 4 Fe(III)-[cytochrome c] + 2 H2O + 4 H(+)(out). Its function is as follows. Component of the cytochrome c oxidase, the last enzyme in the mitochondrial electron transport chain which drives oxidative phosphorylation. The respiratory chain contains 3 multisubunit complexes succinate dehydrogenase (complex II, CII), ubiquinol-cytochrome c oxidoreductase (cytochrome b-c1 complex, complex III, CIII) and cytochrome c oxidase (complex IV, CIV), that cooperate to transfer electrons derived from NADH and succinate to molecular oxygen, creating an electrochemical gradient over the inner membrane that drives transmembrane transport and the ATP synthase. Cytochrome c oxidase is the component of the respiratory chain that catalyzes the reduction of oxygen to water. Electrons originating from reduced cytochrome c in the intermembrane space (IMS) are transferred via the dinuclear copper A center (CU(A)) of subunit 2 and heme A of subunit 1 to the active site in subunit 1, a binuclear center (BNC) formed by heme A3 and copper B (CU(B)). The BNC reduces molecular oxygen to 2 water molecules using 4 electrons from cytochrome c in the IMS and 4 protons from the mitochondrial matrix. The sequence is that of Cytochrome c oxidase subunit 3 (COIII) from Branchiostoma floridae (Florida lancelet).